We begin with the raw amino-acid sequence, 164 residues long: Deoxyuridine 5'-triphosphate nucleotidohydrolase (164 aa).

Substrate contacts are provided by residues 66-68, N79, 83-85, and K93; these read RSG and TVD.

Belongs to the dUTPase family. Mg(2+) is required as a cofactor.

It carries out the reaction dUTP + H2O = dUMP + diphosphate + H(+). It functions in the pathway pyrimidine metabolism; dUMP biosynthesis; dUMP from dCTP (dUTP route): step 2/2. This enzyme is involved in nucleotide metabolism: it produces dUMP, the immediate precursor of thymidine nucleotides and it decreases the intracellular concentration of dUTP so that uracil cannot be incorporated into DNA. This is Deoxyuridine 5'-triphosphate nucleotidohydrolase from Rhodococcus erythropolis (strain PR4 / NBRC 100887).